The primary structure comprises 82 residues: Metallothionein-like protein 2A (82 aa).

It belongs to the metallothionein superfamily. Type 15 family. Expressed in stems, leaves, rachis, inflorescences and seeds.

Metallothioneins have a high content of cysteine residues that bind various heavy metals. The chain is Metallothionein-like protein 2A (MT2A) from Oryza sativa subsp. japonica (Rice).